A 213-amino-acid polypeptide reads, in one-letter code: ATP phosphoribosyltransferase (213 aa).

Belongs to the ATP phosphoribosyltransferase family. Short subfamily. Heteromultimer composed of HisG and HisZ subunits.

The protein localises to the cytoplasm. The catalysed reaction is 1-(5-phospho-beta-D-ribosyl)-ATP + diphosphate = 5-phospho-alpha-D-ribose 1-diphosphate + ATP. It functions in the pathway amino-acid biosynthesis; L-histidine biosynthesis; L-histidine from 5-phospho-alpha-D-ribose 1-diphosphate: step 1/9. Its function is as follows. Catalyzes the condensation of ATP and 5-phosphoribose 1-diphosphate to form N'-(5'-phosphoribosyl)-ATP (PR-ATP). Has a crucial role in the pathway because the rate of histidine biosynthesis seems to be controlled primarily by regulation of HisG enzymatic activity. In Variovorax paradoxus (strain S110), this protein is ATP phosphoribosyltransferase.